The following is a 334-amino-acid chain: Protein-methionine-sulfoxide reductase catalytic subunit MsrP (334 aa).

Positions 1-44 (MKKVSRLTEADVTAESAFFMQRRQVLKALGITTAALSLPTAAHA) form a signal peptide, tat-type signal. Mo-molybdopterin is bound by residues asparagine 88, 91–92 (YE), cysteine 146, threonine 181, asparagine 233, arginine 238, and 249–251 (GIK).

The protein belongs to the MsrP family. Heterodimer of a catalytic subunit (MsrP) and a heme-binding subunit (MsrQ). Mo-molybdopterin is required as a cofactor. Predicted to be exported by the Tat system. The position of the signal peptide cleavage has not been experimentally proven.

The protein resides in the periplasm. It carries out the reaction L-methionyl-[protein] + a quinone + H2O = L-methionyl-(S)-S-oxide-[protein] + a quinol. It catalyses the reaction L-methionyl-[protein] + a quinone + H2O = L-methionyl-(R)-S-oxide-[protein] + a quinol. Part of the MsrPQ system that repairs oxidized periplasmic proteins containing methionine sulfoxide residues (Met-O), using respiratory chain electrons. Thus protects these proteins from oxidative-stress damage caused by reactive species of oxygen and chlorine generated by the host defense mechanisms. MsrPQ is essential for the maintenance of envelope integrity under bleach stress, rescuing a wide series of structurally unrelated periplasmic proteins from methionine oxidation. The catalytic subunit MsrP is non-stereospecific, being able to reduce both (R-) and (S-) diastereoisomers of methionine sulfoxide. This is Protein-methionine-sulfoxide reductase catalytic subunit MsrP from Cronobacter sakazakii (strain ATCC BAA-894) (Enterobacter sakazakii).